The sequence spans 498 residues: Probable cytosol aminopeptidase (498 aa).

Mn(2+)-binding residues include Lys271 and Asp276. Lys283 is a catalytic residue. Mn(2+) contacts are provided by Asp294, Asp353, and Glu355. The active site involves Arg357.

The protein belongs to the peptidase M17 family. Requires Mn(2+) as cofactor.

The protein localises to the cytoplasm. The enzyme catalyses Release of an N-terminal amino acid, Xaa-|-Yaa-, in which Xaa is preferably Leu, but may be other amino acids including Pro although not Arg or Lys, and Yaa may be Pro. Amino acid amides and methyl esters are also readily hydrolyzed, but rates on arylamides are exceedingly low.. It catalyses the reaction Release of an N-terminal amino acid, preferentially leucine, but not glutamic or aspartic acids.. Its function is as follows. Presumably involved in the processing and regular turnover of intracellular proteins. Catalyzes the removal of unsubstituted N-terminal amino acids from various peptides. The protein is Probable cytosol aminopeptidase of Bordetella petrii (strain ATCC BAA-461 / DSM 12804 / CCUG 43448).